The following is a 2090-amino-acid chain: Host cell factor 1 (2090 aa).

The residue at position 2 (Ala2) is an N-acetylalanine. Ser6 is subject to Phosphoserine. Kelch repeat units follow at residues 44–89 (LIVV…GFVC), 93–140 (RLLV…RLGH), 148–194 (KCYL…ITYG), 217–265 (KLVI…TIGN), and 266–313 (KMYV…LMDT). Glycyl lysine isopeptide (Lys-Gly) (interchain with G-Cter in ubiquitin) cross-links involve residues Lys105, Lys163, and Lys244. Lys282 participates in a covalent cross-link: Glycyl lysine isopeptide (Lys-Gly) (interchain with G-Cter in SUMO2). Lys288 bears the N6-acetyllysine mark. Lys363 is covalently cross-linked (Glycyl lysine isopeptide (Lys-Gly) (interchain with G-Cter in ubiquitin)). Residues 366–469 (PPARVQLVRA…TIQVLPTVPG (104 aa)) form the Fibronectin type-III 1 domain. A disordered region spans residues 407-434 (ATATSPTPNPVPSVPANPPKSPAPAAAA). Ser411 is modified (phosphoserine). The span at 413–428 (TPNPVPSVPANPPKSP) shows a compositional bias: pro residues. The segment at 500 to 550 (LVTMRPAGQAGKAPVTVTSLPASVRMVVPTQSAQGTVIGSNPQMSGMAALA) is required for interaction with OGT. 2 positions are modified to omega-N-methylarginine: Arg504 and Arg524. Phosphoserine is present on residues Ser598, Ser666, and Ser669. Residues 610 to 722 (LKTAAAQVGT…KGPLPAGTIL (113 aa)) are interaction with SIN3A. The interval 750-902 (ILGISSVSPS…SLAGAGAHST (153 aa)) is interaction with ZBTB17. Residue Lys813 is modified to N6-acetyllysine. An interaction with GABP2 region spans residues 813 to 912 (KIITAVPKIA…SASLATPITT (100 aa)). 3 HCF repeat repeats span residues 1010–1035 (TLVCSNPPCETHETGTTNTATTTVVA), 1072–1097 (VRVCSNPPCETHETGTTNTATTATSN), and 1101–1126 (QHGCSNPPCETHETGTTSTATTAMSS). The interval 1098-1140 (MAGQHGCSNPPCETHETGTTSTATTAMSSMGTGQQRDTRHTSS) is disordered. Over residues 1114–1130 (TGTTSTATTAMSSMGTG) the composition is skewed to low complexity. One copy of the HCF repeat 4; degenerate repeat lies at 1157–1182 (TQGTVKPQCQTQQANMTNTTMTVQAT). A Phosphoserine modification is found at Ser1204. Arg1216 is subject to Asymmetric dimethylarginine. Ser1223 bears the Phosphoserine mark. HCF repeat repeat units follow at residues 1295–1320 (TQVCSNPPCETHETGTTNTATTSNAG) and 1323–1348 (QRVCSNPPCETHETGTTHTATTATSN). 2 disordered regions span residues 1302–1374 (PCET…TTST) and 1444–1486 (TVTS…TTVS). Residues 1308–1321 (TGTTNTATTSNAGS) show a composition bias toward low complexity. The HCF repeat 7; degenerate repeat unit spans residues 1358-1383 (QQPAGGRPCETHQTTSTGTTMSVSVG). The HCF repeat 8 repeat unit spans residues 1423 to 1448 (QRVCSNPPCETHETGTTHTATTVTSN). Residues 1465–1475 (VVSTQGDSANI) show a composition bias toward polar residues. Positions 1476-1486 (TSSSGITTTVS) are enriched in low complexity. Phosphothreonine is present on Thr1500. Phosphoserine is present on residues Ser1506, Ser1559, and Ser1826. Fibronectin type-III domains are found at residues 1853–1943 (PPPP…TCLP) and 1945–2061 (FPGA…TSKD). Glycyl lysine isopeptide (Lys-Gly) (interchain with G-Cter in ubiquitin) cross-links involve residues Lys1862 and Lys1863. A Phosphoserine modification is found at Ser1893. The tract at residues 2049–2090 (ATQVRWLQETSKDSSGTKPASKRPMSSPEMKSAPKKSKADGQ) is disordered. Lys2060 bears the N6-acetyllysine mark. Lys2079 participates in a covalent cross-link: Glycyl lysine isopeptide (Lys-Gly) (interchain with G-Cter in SUMO2).

In terms of assembly, composed predominantly of six polypeptides ranging from 110 to 150 kDa and a minor 300 kDa polypeptide. The majority of N- and C-terminal cleavage products remain tightly, albeit non-covalently, associated. Interacts with POU2F1, CREB3, ZBTB17, EGR2, E2F4, CREBZF, SP1, GABP2, Sin3 HDAC complex (SIN3A, HDAC1, HDAC2, SUDS3), SAP30, SIN3B and FHL2. Component of a MLL1 complex, composed of at least the core components KMT2A/MLL1, ASH2L, HCFC1, WDR5 and RBBP5, as well as the facultative components BACC1, CHD8, DPY30, E2F6, HCFC2, HSP70, INO80C, KANSL1, LAS1L, MAX, MCRS1, MEN1, MGA, KAT8, PELP1, PHF20, PRP31, RING2, RUVBL1, RUVBL2, SENP3, TAF1, TAF4, TAF6, TAF7, TAF9 and TEX10. Component of a THAP1/THAP3-HCFC1-OGT complex that is required for the regulation of the transcriptional activity of RRM1. Interacts directly with THAP3 (via its HBM). Interacts (via the Kelch-repeat domain) with THAP1 (via the HBM); the interaction recruits HCHC1 to the RRM1. Interacts directly with OGT; the interaction, which requires the HCFC1 cleavage site domain, glycosylates and promotes the proteolytic processing of HCFC1 and retains OGT in the nucleus. Component of the SET1 complex, at least composed of the catalytic subunit (SETD1A or SETD1B), WDR5, WDR82, RBBP5, ASH2L, CXXC1, HCFC1 and DPY30. Component of the NSL complex at least composed of MOF/KAT8, KANSL1, KANSL2, KANSL3, MCRS1, PHF20, OGT1/OGT, WDR5 and HCFC1. Component of a complex at least composed of ZNF335, HCFC1, CCAR2, EMSY, MKI67, RBBP5, ASH2L and WDR5; the complex is formed as a result of interactions between components of a nuclear receptor-mediated transcription complex and a histone methylation complex. Within the complex interacts with ZNF335. Interacts with TET2 and TET3. Interacts with HCFC1R1. Interacts with THAP11. Interacts (via Kelch domain) with KMT2E (via HBM motif). Interacts with E2F1. Accessory scaffold component of the polycomb repressive deubiquitinase (PR-DUB) complex, at least composed of BAP1, one of ASXL1, ASXL2 or (probably) ASXL3 and one of MBD5 or MBD6; the PR-DUB core associates with a number of accessory proteins, including FOXK1, FOXK2, KDM1B, HCFC1, YY1 and OGT. Interacts with YY1 (via Gly-rich region); the interaction is direct. Interacts with BAP1 (via HBM-like motif). Proteolytically cleaved at one or several PPCE--THET sites within the HCF repeats. Cleavage is promoted by O-glycosylation. Further cleavage of the primary N- and C-terminal chains results in a 'trimming' and accumulation of the smaller chains. Cleavage is promoted by O-glycosylation. In terms of processing, O-glycosylated. GlcNAcylation by OGT promotes proteolytic processing. Post-translationally, ubiquitinated. Lys-1862 and Lys-1863 are ubiquitinated both via 'Lys-48'- and 'Lys-63'-linked polyubiquitin chains. BAP1 mediated deubiquitination of 'Lys-48'-linked polyubiquitin chains; deubiquitination by BAP1 does not seem to stabilize the protein.

Its subcellular location is the cytoplasm. It is found in the nucleus. Functionally, transcriptional coregulator. Serves as a scaffold protein, bridging interactions between transcription factors, including THAP11 and ZNF143, and transcriptional coregulators. Involved in control of the cell cycle. Also antagonizes transactivation by ZBTB17 and GABP2; represses ZBTB17 activation of the p15(INK4b) promoter and inhibits its ability to recruit p300. Coactivator for EGR2 and GABP2. Tethers the chromatin modifying Set1/Ash2 histone H3 'Lys-4' methyltransferase (H3K4me) and Sin3 histone deacetylase (HDAC) complexes (involved in the activation and repression of transcription respectively) together. As part of the NSL complex it may be involved in acetylation of nucleosomal histone H4 on several lysine residues. Recruits KMT2E to E2F1 responsive promoters promoting transcriptional activation and thereby facilitates G1 to S phase transition. Modulates expression of homeobox protein PDX1, perhaps acting in concert with transcription factor E2F1, thereby regulating pancreatic beta-cell growth and glucose-stimulated insulin secretion. May negatively modulate transcriptional activity of FOXO3. The sequence is that of Host cell factor 1 from Mesocricetus auratus (Golden hamster).